Here is a 404-residue protein sequence, read N- to C-terminus: CCA-adding enzyme (404 aa).

Positions 27 and 30 each coordinate ATP. CTP is bound by residues G27 and R30. Mg(2+) is bound by residues D40 and D42. The ATP site is built by R111, D154, R157, R160, and R163. CTP-binding residues include R111, D154, R157, R160, and R163.

This sequence belongs to the tRNA nucleotidyltransferase/poly(A) polymerase family. Bacterial CCA-adding enzyme type 3 subfamily. Homodimer. Mg(2+) serves as cofactor.

The catalysed reaction is a tRNA precursor + 2 CTP + ATP = a tRNA with a 3' CCA end + 3 diphosphate. It catalyses the reaction a tRNA with a 3' CCA end + 2 CTP + ATP = a tRNA with a 3' CCACCA end + 3 diphosphate. In terms of biological role, catalyzes the addition and repair of the essential 3'-terminal CCA sequence in tRNAs without using a nucleic acid template. Adds these three nucleotides in the order of C, C, and A to the tRNA nucleotide-73, using CTP and ATP as substrates and producing inorganic pyrophosphate. tRNA 3'-terminal CCA addition is required both for tRNA processing and repair. Also involved in tRNA surveillance by mediating tandem CCA addition to generate a CCACCA at the 3' terminus of unstable tRNAs. While stable tRNAs receive only 3'-terminal CCA, unstable tRNAs are marked with CCACCA and rapidly degraded. The structural flexibility of RNA controls the choice between CCA versus CCACCA addition: following the first CCA addition cycle, nucleotide-binding to the active site triggers a clockwise screw motion, producing torque on the RNA. This ejects stable RNAs, whereas unstable RNAs are refolded while bound to the enzyme and subjected to a second CCA catalytic cycle. This is CCA-adding enzyme from Geobacillus stearothermophilus (Bacillus stearothermophilus).